Reading from the N-terminus, the 453-residue chain is Na(+)/H(+) antiporter NhaA (453 aa).

The next 11 helical transmembrane spans lie at 22–42 (ASLL…SPWA), 72–92 (MLAF…GLEI), 108–128 (LLPI…YMLV), 137–157 (GAAI…GLLG), 166–186 (IFLT…IALF), 189–209 (GHIA…LYVG), 218–238 (LFFY…GIHP), 316–336 (PLVN…VTFG), 343–363 (LVNV…LGIF), 386–406 (LFGV…IANL), and 424–444 (LGVF…LKWV).

This sequence belongs to the NhaA Na(+)/H(+) (TC 2.A.33) antiporter family.

It is found in the cell inner membrane. It catalyses the reaction Na(+)(in) + 2 H(+)(out) = Na(+)(out) + 2 H(+)(in). Na(+)/H(+) antiporter that extrudes sodium in exchange for external protons. This Parabacteroides distasonis (strain ATCC 8503 / DSM 20701 / CIP 104284 / JCM 5825 / NCTC 11152) protein is Na(+)/H(+) antiporter NhaA.